The following is a 197-amino-acid chain: Transcription factor FapR (197 aa).

It belongs to the FapR family.

In terms of biological role, transcriptional factor involved in regulation of membrane lipid biosynthesis by repressing genes involved in fatty acid and phospholipid metabolism. The sequence is that of Transcription factor FapR from Bacillus cytotoxicus (strain DSM 22905 / CIP 110041 / 391-98 / NVH 391-98).